Consider the following 357-residue polypeptide: Protein MGF 360-22R (357 aa).

An ANK repeat occupies 66–98 (DLNLALMKAVQENNYELIMLFTEWGADINLGLI).

Belongs to the asfivirus MGF 360 family.

Its function is as follows. Plays a role in virus cell tropism, and may be required for efficient virus replication in macrophages. In African swine fever virus (isolate Tick/Malawi/Lil 20-1/1983) (ASFV), this protein is Protein MGF 360-22R.